The sequence spans 860 residues: Leucine--tRNA ligase (860 aa).

A 'HIGH' region motif is present at residues 42–52; it reads PYPSGRLHMGH. A 'KMSKS' region motif is present at residues 619–623; that stretch reads KMSKS. ATP is bound at residue Lys622.

Belongs to the class-I aminoacyl-tRNA synthetase family.

The protein resides in the cytoplasm. It catalyses the reaction tRNA(Leu) + L-leucine + ATP = L-leucyl-tRNA(Leu) + AMP + diphosphate. The chain is Leucine--tRNA ligase from Escherichia coli (strain 55989 / EAEC).